Reading from the N-terminus, the 284-residue chain is Pantothenate synthetase (284 aa).

30 to 37 (MGNLHDGH) is a binding site for ATP. The active-site Proton donor is H37. Q61 contacts (R)-pantoate. Q61 is a binding site for beta-alanine. Position 149–152 (149–152 (GEKD)) interacts with ATP. Q155 contributes to the (R)-pantoate binding site. Residues I178 and 186–189 (LSSR) contribute to the ATP site.

Belongs to the pantothenate synthetase family. Homodimer.

It is found in the cytoplasm. It catalyses the reaction (R)-pantoate + beta-alanine + ATP = (R)-pantothenate + AMP + diphosphate + H(+). It participates in cofactor biosynthesis; (R)-pantothenate biosynthesis; (R)-pantothenate from (R)-pantoate and beta-alanine: step 1/1. Functionally, catalyzes the condensation of pantoate with beta-alanine in an ATP-dependent reaction via a pantoyl-adenylate intermediate. The chain is Pantothenate synthetase from Salmonella typhi.